The primary structure comprises 109 residues: Nucleoid-associated protein HAPS_1040 (109 aa).

Positions 1–21 (MFGKGGLGGLMKQAQQMQERM) are disordered. Over residues 10 to 19 (LMKQAQQMQE) the composition is skewed to low complexity.

This sequence belongs to the YbaB/EbfC family. Homodimer.

Its subcellular location is the cytoplasm. The protein localises to the nucleoid. Binds to DNA and alters its conformation. May be involved in regulation of gene expression, nucleoid organization and DNA protection. The chain is Nucleoid-associated protein HAPS_1040 from Glaesserella parasuis serovar 5 (strain SH0165) (Haemophilus parasuis).